We begin with the raw amino-acid sequence, 339 residues long: DNA-directed RNA polymerase subunit alpha (339 aa).

The alpha N-terminal domain (alpha-NTD) stretch occupies residues 1 to 233; it reads MVREEVAGST…DLFLPFLHAE (233 aa). Residues 264-339 are alpha C-terminal domain (alpha-CTD); sequence KKGIPLNCIF…IDLLKNKLSF (76 aa).

Belongs to the RNA polymerase alpha chain family. In plastids the minimal PEP RNA polymerase catalytic core is composed of four subunits: alpha, beta, beta', and beta''. When a (nuclear-encoded) sigma factor is associated with the core the holoenzyme is formed, which can initiate transcription.

Its subcellular location is the plastid. It is found in the chloroplast. The catalysed reaction is RNA(n) + a ribonucleoside 5'-triphosphate = RNA(n+1) + diphosphate. Its function is as follows. DNA-dependent RNA polymerase catalyzes the transcription of DNA into RNA using the four ribonucleoside triphosphates as substrates. In Heteranthelium piliferum (Elymus pilifer), this protein is DNA-directed RNA polymerase subunit alpha.